The sequence spans 334 residues: Holliday junction branch migration complex subunit RuvB (334 aa).

The segment at 4 to 186 (ADRLIAPENP…FGITQRLEYY (183 aa)) is large ATPase domain (RuvB-L). ATP is bound by residues Ile-25, Arg-26, Gly-67, Lys-70, Thr-71, Thr-72, 133–135 (EDY), Arg-176, Tyr-186, and Arg-223. Residue Thr-71 coordinates Mg(2+). The segment at 187–257 (KIPDLQNIVQ…TADKALNMLD (71 aa)) is small ATPAse domain (RuvB-S). Residues 260-334 (SKGFDYMDRK…RAYLHFGIEK (75 aa)) are head domain (RuvB-H). Arg-315 and Arg-320 together coordinate DNA.

Belongs to the RuvB family. As to quaternary structure, homohexamer. Forms an RuvA(8)-RuvB(12)-Holliday junction (HJ) complex. HJ DNA is sandwiched between 2 RuvA tetramers; dsDNA enters through RuvA and exits via RuvB. An RuvB hexamer assembles on each DNA strand where it exits the tetramer. Each RuvB hexamer is contacted by two RuvA subunits (via domain III) on 2 adjacent RuvB subunits; this complex drives branch migration. In the full resolvosome a probable DNA-RuvA(4)-RuvB(12)-RuvC(2) complex forms which resolves the HJ.

Its subcellular location is the cytoplasm. It carries out the reaction ATP + H2O = ADP + phosphate + H(+). Functionally, the RuvA-RuvB-RuvC complex processes Holliday junction (HJ) DNA during genetic recombination and DNA repair, while the RuvA-RuvB complex plays an important role in the rescue of blocked DNA replication forks via replication fork reversal (RFR). RuvA specifically binds to HJ cruciform DNA, conferring on it an open structure. The RuvB hexamer acts as an ATP-dependent pump, pulling dsDNA into and through the RuvAB complex. RuvB forms 2 homohexamers on either side of HJ DNA bound by 1 or 2 RuvA tetramers; 4 subunits per hexamer contact DNA at a time. Coordinated motions by a converter formed by DNA-disengaged RuvB subunits stimulates ATP hydrolysis and nucleotide exchange. Immobilization of the converter enables RuvB to convert the ATP-contained energy into a lever motion, pulling 2 nucleotides of DNA out of the RuvA tetramer per ATP hydrolyzed, thus driving DNA branch migration. The RuvB motors rotate together with the DNA substrate, which together with the progressing nucleotide cycle form the mechanistic basis for DNA recombination by continuous HJ branch migration. Branch migration allows RuvC to scan DNA until it finds its consensus sequence, where it cleaves and resolves cruciform DNA. The polypeptide is Holliday junction branch migration complex subunit RuvB (Vibrio vulnificus (strain YJ016)).